The sequence spans 531 residues: Keratin, type II cytoskeletal 79 (531 aa).

The segment covering 1–12 (MRSSLSRQTFST) has biased composition (polar residues). Positions 1 to 55 (MRSSLSRQTFSTKGGFSSNSASGGGGSRMRTSYSSVTMSRGSGGGGGVRSGSSSG) are disordered. The tract at residues 1-138 (MRSSLSRQTF…DPEIQRVRTQ (138 aa)) is head. Residues 28–40 (RMRTSYSSVTMSR) are compositionally biased toward low complexity. Positions 41–55 (GSGGGGGVRSGSSSG) are enriched in gly residues. Positions 139–174 (EREQIKTLNNKFASFIDKVRFLEQQNKVLETKWALL) are coil 1A. The IF rod domain maps to 139–453 (EREQIKTLNN…KLLESEESRM (315 aa)). The segment at 175–194 (QEQSQNTGVARSLEPFFENY) is linker 1. Residues 195 to 286 (LSTLRRQLDT…QLFEMELSQV (92 aa)) form a coil 1B region. Positions 287-310 (QTNVSDTNVILSMDNNRNLDLDSI) are linker 12. The coil 2 stretch occupies residues 311 to 449 (IAEVKAQYEL…ATYRKLLESE (139 aa)). A tail region spans residues 450–531 (ESRMSGDCPS…TTVKTSSRRY (82 aa)).

This sequence belongs to the intermediate filament family. In terms of assembly, heterotetramer of two type I and two type II keratins.

The protein is Keratin, type II cytoskeletal 79 (Krt79) of Mus musculus (Mouse).